Reading from the N-terminus, the 338-residue chain is Ferredoxin--NADP reductase (338 aa).

D36, Q44, Y49, V89, F123, D290, and T331 together coordinate FAD.

Belongs to the ferredoxin--NADP reductase type 2 family. In terms of assembly, homodimer. FAD serves as cofactor.

It carries out the reaction 2 reduced [2Fe-2S]-[ferredoxin] + NADP(+) + H(+) = 2 oxidized [2Fe-2S]-[ferredoxin] + NADPH. The sequence is that of Ferredoxin--NADP reductase from Anaplasma phagocytophilum (strain HZ).